The sequence spans 206 residues: Proteasome subunit beta 1 (206 aa).

A propeptide spans 1–5 (removed in mature form; by autocatalysis); that stretch reads MLMKG. Thr-6 serves as the catalytic Nucleophile.

The protein belongs to the peptidase T1B family. As to quaternary structure, the 20S proteasome core is composed of 14 alpha and 14 beta subunits that assemble into four stacked heptameric rings, resulting in a barrel-shaped structure. The two inner rings, each composed of seven catalytic beta subunits, are sandwiched by two outer rings, each composed of seven alpha subunits. The catalytic chamber with the active sites is on the inside of the barrel. Has a gated structure, the ends of the cylinder being occluded by the N-termini of the alpha-subunits. Is capped at one or both ends by the proteasome regulatory ATPase, PAN.

The protein localises to the cytoplasm. The catalysed reaction is Cleavage of peptide bonds with very broad specificity.. The formation of the proteasomal ATPase PAN-20S proteasome complex, via the docking of the C-termini of PAN into the intersubunit pockets in the alpha-rings, triggers opening of the gate for substrate entry. Interconversion between the open-gate and close-gate conformations leads to a dynamic regulation of the 20S proteasome proteolysis activity. Functionally, component of the proteasome core, a large protease complex with broad specificity involved in protein degradation. In Korarchaeum cryptofilum (strain OPF8), this protein is Proteasome subunit beta 1.